Consider the following 220-residue polypeptide: Probable nicotinate-nucleotide adenylyltransferase (220 aa).

Belongs to the NadD family.

The catalysed reaction is nicotinate beta-D-ribonucleotide + ATP + H(+) = deamido-NAD(+) + diphosphate. It participates in cofactor biosynthesis; NAD(+) biosynthesis; deamido-NAD(+) from nicotinate D-ribonucleotide: step 1/1. Catalyzes the reversible adenylation of nicotinate mononucleotide (NaMN) to nicotinic acid adenine dinucleotide (NaAD). This chain is Probable nicotinate-nucleotide adenylyltransferase, found in Saccharophagus degradans (strain 2-40 / ATCC 43961 / DSM 17024).